A 183-amino-acid chain; its full sequence is MTCYTPRLLTRYREEIVPVLMSRFDINNVHQVPSITKIVVNSGVGDAARDSKIIEGAVSDITLITGQKPRINRAKQSIAKFKLREGQAVGVTATLRGRRMWEFLDRLLTLALPRIRDFRGISDKQFDGHGNYTFGLSEQGIFHEIDQDKIDRVRGMDITVVTTSSSDDMARALLGELGFPFKK.

Belongs to the universal ribosomal protein uL5 family. Part of the 50S ribosomal subunit; part of the 5S rRNA/L5/L18/L25 subcomplex. Contacts the 5S rRNA and the P site tRNA. Forms a bridge to the 30S subunit in the 70S ribosome.

This is one of the proteins that bind and probably mediate the attachment of the 5S RNA into the large ribosomal subunit, where it forms part of the central protuberance. In the 70S ribosome it contacts protein S13 of the 30S subunit (bridge B1b), connecting the 2 subunits; this bridge is implicated in subunit movement. Contacts the P site tRNA; the 5S rRNA and some of its associated proteins might help stabilize positioning of ribosome-bound tRNAs. The protein is Large ribosomal subunit protein uL5 of Tropheryma whipplei (strain TW08/27) (Whipple's bacillus).